We begin with the raw amino-acid sequence, 214 residues long: UPF0502 protein Spro_2794 (214 aa).

It belongs to the UPF0502 family.

This is UPF0502 protein Spro_2794 from Serratia proteamaculans (strain 568).